The chain runs to 1131 residues: MSDKRADGRLEGTSDTFGGLVIKKKKVEGDSKPTEPSGKSLLGLDRLASTKREHARKRLEDDDDRGVTESVRKGIEKVHEKHRDRDDRGMKYKSRDDDRRRDRDRSERREPSSRRGWKDRSGDQTPRFKVPDTPSRMSWDQDDREGSSRKRNSWDMPTPRGERDRKRYMDSERSISSAWRSERRNRDDEKRRRHRKPEDSVRSVKEEKAEPTFHDDEERAQWEEEQKNLDREWYDNEGAFDDEYNPFNKVSDEFVEKREKQWQEKTQKPRLTVKQQAIKRENELWENNRLHRSGVVAMADELSSIFEDETDENRVTILVQNIVPPFLDGRIVFTKQAQPIIPVVDTTCDMAVSAARGSVAVRKRREVEDRKKAQDKHWELAGSKLGNLMGVKEKKDETADPEDDDSGNYKESHQFASHMKDNEAVSDFAMEKSIKQQREYLPVFACRQKMMNVIRENNVVIIVGETGSGKTTQLAQYLLEDGFGDSGLIGCTQPRRVAAMSVARRVADEMGVDLGQDVGYAIRFEDCTSEKTIIKYMTDGILLRECLGDGSLDQYSAIIMDEAHERSLNTDVLFGLLREVIAKRADLKLIVTSATMDADKFADFFGGNCPTFTIPGRTFPVELFHARTPVEDYVDAAVKQAVTIHLGGMDGDILIFMPGQEDIECTCEMIKEKLGELDEAPPLAVLPIYSQLPSDLQAKIFQRAPGGMRKAIVATNIAETSLTVDGILFVIDPGFCKMKVYNPRIGMDALSIFPVSQASANQRTGRAGRTGPGQCYRLYTERQFKDELLKSTVPEIQRTNLANVVLLLKSLGVDDLLKFHFMDAPPQDNMLNSMYQLWTLGALDNTGQLTPMGRKMVEFPLDPTLSKMLIMSAEMGCSDEVLTIVSMLSVPAIFFRPKGREEEADAKKEKFQVPESDHLTFLNVYIQWRTHKYSAKWCADNYLHVKALKKVREVRAQLKEIMQDLKLPLISNGSEWDIVRKCICSAYFHNAARLKGIGEYVNVRTGIPCFLHPTSALFGMGFMPDYVVYHELIMTAKEYMQCVTAVDAIWLAELGPMFYSIKESKQSRKELKMESVRTVETMEAEMREAQKEMERRKEESDKAFKRPESSRRVVEVGSKSARSERRKLWGL.

Composition is skewed to basic and acidic residues over residues 1–12 (MSDKRADGRLEG), 65–122 (RGVT…DRSG), 139–148 (WDQDDREGSS), 160–173 (RGER…DSER), 180–225 (RSER…WEEE), and 407–416 (GNYKESHQFA). Disordered stretches follow at residues 1–225 (MSDK…WEEE) and 389–416 (MGVK…HQFA). In terms of domain architecture, Helicase ATP-binding spans 451–614 (MNVIRENNVV…FGGNCPTFTI (164 aa)). Residue 464 to 471 (GETGSGKT) participates in ATP binding. The short motif at 561-564 (DEAH) is the DEAH box element. Residues 629–812 (PVEDYVDAAV…NVVLLLKSLG (184 aa)) enclose the Helicase C-terminal domain. Basic and acidic residues-rich tracts occupy residues 1085–1114 (EMRE…RRVV) and 1121–1131 (ARSERRKLWGL). A disordered region spans residues 1085–1131 (EMREAQKEMERRKEESDKAFKRPESSRRVVEVGSKSARSERRKLWGL).

This sequence belongs to the DEAD box helicase family. DEAH subfamily. PRP16 sub-subfamily.

Its subcellular location is the nucleus. It catalyses the reaction ATP + H2O = ADP + phosphate + H(+). Functionally, probable ATP-binding RNA helicase involved in pre-mRNA splicing. The chain is Probable pre-mRNA-splicing factor ATP-dependent RNA helicase mog-1 (mog-1) from Caenorhabditis elegans.